A 161-amino-acid chain; its full sequence is MKYDTSELCDIYQEDVNVVEPLFTNFGGRTSFGGQITTVKCFEDNGLLYDLLQENGHGRVLLVDGGGSVRRALIDAELGNLAVQNEWEGIVVYGAVRQVDDLEELDLGIQAMAATPAGAASEGIGESDTRVNFGGVTFFSGDHLYADNTGVILSKDALDLE.

Belongs to the RraA family. Homotrimer. Binds to both RNA-binding sites in the C-terminal region of Rne and to RhlB.

It is found in the cytoplasm. Functionally, globally modulates RNA abundance by binding to RNase E (Rne) and regulating its endonucleolytic activity. Can modulate Rne action in a substrate-dependent manner by altering the composition of the degradosome. Modulates RNA-binding and helicase activities of the degradosome. This Sodalis glossinidius (strain morsitans) protein is Regulator of ribonuclease activity A.